Here is an 86-residue protein sequence, read N- to C-terminus: U15-lycotoxin-Ls1d (86 aa).

Positions 1-20 (MNSKIFAVLLLLALLSCVLS) are cleaved as a signal peptide. Residues 21 to 66 (DQYCPKSSITACKKMNIRNDCCKDDDCTGGSWCCATPCGNFCKYPT) enclose the WAP domain. 5 disulfides stabilise this stretch: cysteine 24–cysteine 54, cysteine 32–cysteine 58, cysteine 41–cysteine 53, cysteine 42–cysteine 80, and cysteine 47–cysteine 62.

The protein belongs to the venom protein 11 family. 01 (wap-1) subfamily. Post-translationally, contains 5 disulfide bonds. In terms of tissue distribution, expressed by the venom gland.

Its subcellular location is the secreted. In terms of biological role, has antibacterial activity. This is U15-lycotoxin-Ls1d from Lycosa singoriensis (Wolf spider).